We begin with the raw amino-acid sequence, 473 residues long: Siroheme synthase (473 aa).

The segment at 1–203 (MTLFPIFADL…QQPGLAEQEL (203 aa)) is precorrin-2 dehydrogenase /sirohydrochlorin ferrochelatase. Residues 22–23 (AV) and 43–44 (PR) each bind NAD(+). Position 128 is a phosphoserine (S128). A uroporphyrinogen-III C-methyltransferase region spans residues 216–473 (GSVVLVGAGP…GLPGPQALAA (258 aa)). P225 provides a ligand contact to S-adenosyl-L-methionine. Catalysis depends on D248, which acts as the Proton acceptor. K270 serves as the catalytic Proton donor. Residues 302 to 304 (GGD), I307, 332 to 333 (TA), M384, and G413 each bind S-adenosyl-L-methionine.

The protein in the N-terminal section; belongs to the precorrin-2 dehydrogenase / sirohydrochlorin ferrochelatase family. It in the C-terminal section; belongs to the precorrin methyltransferase family.

It carries out the reaction uroporphyrinogen III + 2 S-adenosyl-L-methionine = precorrin-2 + 2 S-adenosyl-L-homocysteine + H(+). The enzyme catalyses precorrin-2 + NAD(+) = sirohydrochlorin + NADH + 2 H(+). The catalysed reaction is siroheme + 2 H(+) = sirohydrochlorin + Fe(2+). The protein operates within cofactor biosynthesis; adenosylcobalamin biosynthesis; precorrin-2 from uroporphyrinogen III: step 1/1. It participates in cofactor biosynthesis; adenosylcobalamin biosynthesis; sirohydrochlorin from precorrin-2: step 1/1. Its pathway is porphyrin-containing compound metabolism; siroheme biosynthesis; precorrin-2 from uroporphyrinogen III: step 1/1. It functions in the pathway porphyrin-containing compound metabolism; siroheme biosynthesis; siroheme from sirohydrochlorin: step 1/1. The protein operates within porphyrin-containing compound metabolism; siroheme biosynthesis; sirohydrochlorin from precorrin-2: step 1/1. Multifunctional enzyme that catalyzes the SAM-dependent methylations of uroporphyrinogen III at position C-2 and C-7 to form precorrin-2 via precorrin-1. Then it catalyzes the NAD-dependent ring dehydrogenation of precorrin-2 to yield sirohydrochlorin. Finally, it catalyzes the ferrochelation of sirohydrochlorin to yield siroheme. This chain is Siroheme synthase, found in Bordetella pertussis (strain Tohama I / ATCC BAA-589 / NCTC 13251).